Consider the following 341-residue polypeptide: Phenylalanine--tRNA ligase alpha subunit (341 aa).

A Mg(2+)-binding site is contributed by glutamate 256.

This sequence belongs to the class-II aminoacyl-tRNA synthetase family. Phe-tRNA synthetase alpha subunit type 1 subfamily. As to quaternary structure, tetramer of two alpha and two beta subunits. Mg(2+) is required as a cofactor.

The protein resides in the cytoplasm. It carries out the reaction tRNA(Phe) + L-phenylalanine + ATP = L-phenylalanyl-tRNA(Phe) + AMP + diphosphate + H(+). The sequence is that of Phenylalanine--tRNA ligase alpha subunit from Chlamydia felis (strain Fe/C-56) (Chlamydophila felis).